The following is a 560-amino-acid chain: Probable sulfate transporter MT1781 (560 aa).

The next 11 helical transmembrane spans lie at 29–49, 51–71, 79–99, 105–125, 138–158, 184–204, 207–227, 256–276, 333–353, 355–375, and 394–414; these read VLAGLTVAAYLIPQAMAYATV, GLPPAAGLWASIAPLAIYALL, IGPESATALMTAAVLAPMAAG, AVLAATLGLLVGLICLLAGTA, VLVGYMAGIALVMISSQLGTI, WPTFVLAMSVLALLTMLTRWA, APGPIIAVLAATMLVAVMSLD, ALIIPAAGIAIVTFTDGVLTA, LIALGLVVIVMVFASGLLAMF, IAALGALVVYAALRLIDLSEF, and AAVLGLGVFYGVLAAVALSIL. The region spanning 442-557 is the STAS domain; the sequence is DYPQAKRVPG…MTLPTAVQAF (116 aa).

The protein belongs to the SLC26A/SulP transporter (TC 2.A.53) family.

The protein resides in the cell membrane. This Mycobacterium tuberculosis (strain CDC 1551 / Oshkosh) protein is Probable sulfate transporter MT1781.